The chain runs to 164 residues: Cytochrome c oxidase subunit 4, mitochondrial (164 aa).

Residues 1 to 33 constitute a mitochondrion transit peptide; sequence MFMNSMLRVSRQRAAVRSTVSLYRGFVSASIRR. Zn(2+) contacts are provided by Cys120, His128, Cys143, and Cys146.

Belongs to the cytochrome c oxidase subunit 5B family. Component of the cytochrome c oxidase (complex IV, CIV), a multisubunit enzyme composed of a catalytic core of 3 subunits and several supernumerary subunits. The complex exists as a monomer or a dimer and forms supercomplexes (SCs) in the inner mitochondrial membrane with ubiquinol-cytochrome c oxidoreductase (cytochrome b-c1 complex, complex III, CIII).

It is found in the mitochondrion inner membrane. Its pathway is energy metabolism; oxidative phosphorylation. Its function is as follows. Component of the cytochrome c oxidase, the last enzyme in the mitochondrial electron transport chain which drives oxidative phosphorylation. The respiratory chain contains 3 multisubunit complexes succinate dehydrogenase (complex II, CII), ubiquinol-cytochrome c oxidoreductase (cytochrome b-c1 complex, complex III, CIII) and cytochrome c oxidase (complex IV, CIV), that cooperate to transfer electrons derived from NADH and succinate to molecular oxygen, creating an electrochemical gradient over the inner membrane that drives transmembrane transport and the ATP synthase. Cytochrome c oxidase is the component of the respiratory chain that catalyzes the reduction of oxygen to water. Electrons originating from reduced cytochrome c in the intermembrane space (IMS) are transferred via the dinuclear copper A center (CU(A)) of subunit 2 and heme A of subunit 1 to the active site in subunit 1, a binuclear center (BNC) formed by heme A3 and copper B (CU(B)). The BNC reduces molecular oxygen to 2 water molecules using 4 electrons from cytochrome c in the IMS and 4 protons from the mitochondrial matrix. This Schizosaccharomyces pombe (strain 972 / ATCC 24843) (Fission yeast) protein is Cytochrome c oxidase subunit 4, mitochondrial (cox4).